The sequence spans 285 residues: Elongation factor Ts (285 aa).

The involved in Mg(2+) ion dislocation from EF-Tu stretch occupies residues 82-85 (TDFV).

Belongs to the EF-Ts family.

The protein localises to the cytoplasm. Its function is as follows. Associates with the EF-Tu.GDP complex and induces the exchange of GDP to GTP. It remains bound to the aminoacyl-tRNA.EF-Tu.GTP complex up to the GTP hydrolysis stage on the ribosome. This Yersinia pseudotuberculosis serotype O:1b (strain IP 31758) protein is Elongation factor Ts.